The following is a 169-amino-acid chain: NADH-quinone oxidoreductase subunit B (169 aa).

Cys-45, Cys-46, Cys-111, and Cys-141 together coordinate [4Fe-4S] cluster.

This sequence belongs to the complex I 20 kDa subunit family. NDH-1 is composed of 14 different subunits. Subunits NuoB, C, D, E, F, and G constitute the peripheral sector of the complex. It depends on [4Fe-4S] cluster as a cofactor.

It is found in the cell membrane. The catalysed reaction is a quinone + NADH + 5 H(+)(in) = a quinol + NAD(+) + 4 H(+)(out). NDH-1 shuttles electrons from NADH, via FMN and iron-sulfur (Fe-S) centers, to quinones in the respiratory chain. The immediate electron acceptor for the enzyme in this species is believed to be a menaquinone. Couples the redox reaction to proton translocation (for every two electrons transferred, four hydrogen ions are translocated across the cytoplasmic membrane), and thus conserves the redox energy in a proton gradient. The polypeptide is NADH-quinone oxidoreductase subunit B (Clostridium beijerinckii (strain ATCC 51743 / NCIMB 8052) (Clostridium acetobutylicum)).